The following is a 64-amino-acid chain: Disintegrin VB7B (64 aa).

Residues Glu1–Asn64 enclose the Disintegrin domain. Intrachain disulfides connect Cys10-Cys33, Cys24-Cys30, Cys29-Cys54, and Cys42-Cys61. The Cell attachment site; atypical (KGD) motif lies at Lys46 to Asp48.

This sequence belongs to the venom metalloproteinase (M12B) family. P-II subfamily. P-IIe sub-subfamily. In terms of assembly, heterodimer with VB7A; disulfide-linked. Expressed by the venom gland.

The protein resides in the secreted. Poor inhibitor of platelet aggregation. The disintegrin inhibits the adhesion of cells expressing the RGD-dependent integrin alpha-5/beta-1 (ITGA5/ITGB1) to immobilized fibronectin. Inhibition on alpha-IIb/beta-3 (ITGA2B/ITGB3) is low. This is Disintegrin VB7B from Vipera berus berus (Common viper).